The following is a 473-amino-acid chain: Dynein axonemal assembly factor 11 (473 aa).

4 LRR repeats span residues 22–43, 45–66, 67–88, and 89–110; these read SLEE…DKWC, DLKI…SKLK, KLEY…EGCE, and WLTK…KTLT. Residues 123–161 form the LRRCT domain; the sequence is NPCADFDGYRQFVVVTLQQLKWLDGKEIERSERIQALQN. A coiled-coil region spans residues 153-205; the sequence is SERIQALQNYTSVEQQIREQEKAYCLRRAKEKEEAQRKLEEENESEDKKKSST. 2 stretches are compositionally biased toward basic and acidic residues: residues 188-202 and 273-283; these read QRKL…DKKK and EKQRKAQDKLS. Disordered regions lie at residues 188-244, 273-292, and 387-473; these read QRKL…TKES, EKQR…AKPP, and VGEM…PPLI. Residues 305–402 enclose the CS domain; that stretch reads VNEAKLDFSL…GGQRTPTSVK (98 aa). Positions 397-408 are enriched in low complexity; sequence TPTSVKTTSTSS. Residues 417-431 are compositionally biased toward basic and acidic residues; sequence KQIERLEVDPSKHSC. The span at 456–467 shows a compositional bias: acidic residues; it reads PSEEDPDFEDNP.

The protein belongs to the tilB family. In terms of assembly, interacts (via CS domain) with ZMYND10 (via C-terminus). As to expression, mainly expressed in cells with motile cilia. Expressed in epithelial cells of the trachea, testis and ependymal cells of the cerebral ventricles. In testis, abundant expression in late prophase of meiosis I with a dramatic decrease after the first meiotic division (at protein level).

It is found in the cytoplasm. Its subcellular location is the cell projection. The protein resides in the cilium. It localises to the dynein axonemal particle. The protein localises to the flagellum. Involved in dynein arm assembly, is important for expression and transporting outer dynein arm (ODA) proteins from the cytoplasm to the cilia. Acts as a crucial component in the formation and motility of spermatozoal flagella. The polypeptide is Dynein axonemal assembly factor 11 (Dnaaf11) (Mus musculus (Mouse)).